A 192-amino-acid chain; its full sequence is A-type ATP synthase subunit E (192 aa).

This sequence belongs to the V-ATPase E subunit family. In terms of assembly, has multiple subunits with at least A(3), B(3), C, D, E, F, H, I and proteolipid K(x).

It is found in the cell membrane. In terms of biological role, component of the A-type ATP synthase that produces ATP from ADP in the presence of a proton gradient across the membrane. This chain is A-type ATP synthase subunit E, found in Methanocorpusculum labreanum (strain ATCC 43576 / DSM 4855 / Z).